Reading from the N-terminus, the 433-residue chain is Type I acyl-CoA thioesterase mpaH (433 aa).

The abhydrolase domain stretch occupies residues 58 to 246 (HGVGLPKELY…VKARFDAAAD (189 aa)). Substrate is bound at residue Val60. The Nucleophile role is filled by Ser139. A substrate-binding site is contributed by Phe140. Catalysis depends on residues Asp163 and His365.

This sequence belongs to the AB hydrolase superfamily. MpaH hydrolase family. Homodimer.

It localises to the peroxisome matrix. It catalyses the reaction mycophenolyl-CoA + H2O = mycophenolate + CoA + H(+). Its pathway is secondary metabolite biosynthesis; terpenoid biosynthesis. Its function is as follows. Type I acyl-CoA thioesterase; part of the gene cluster that mediates the biosynthesis of mycophenolic acid (MPA), the first isolated antibiotic natural product in the world obtained from a culture of Penicillium brevicompactum in 1893. MpaH acts as a peroxisomal acyl-CoA hydrolase that converts MPA-CoA into the final product MPA. The first step of the pathway is the synthesis of 5-methylorsellinic acid (5MOA) by the cytosolic polyketide synthase mpaC. 5MOA is then converted to the phthalide compound 5,7-dihydroxy-4,6-dimethylphthalide (DHMP) by the endoplasmic reticulum-bound cytochrome P450 monooxygenase mpaDE. MpaDE first catalyzes hydroxylation of 5-MOA to 4,6-dihydroxy-2-(hydroxymethyl)-3-methylbenzoic acid (DHMB). MpaDE then acts as a lactone synthase that catalyzes the ring closure to convert DHMB into DHMP. The next step is the prenylation of DHMP by the Golgi apparatus-associated prenyltransferase mpaA to yield farnesyl-DHMP (FDHMP). The ER-bound oxygenase mpaB then mediates the oxidative cleavage the C19-C20 double bond in FDHMP to yield FDHMP-3C via a mycophenolic aldehyde intermediate. The O-methyltransferase mpaG catalyzes the methylation of FDHMP-3C to yield MFDHMP-3C. After the cytosolic methylation of FDHMP-3C, MFDHMP-3C enters into peroxisomes probably via free diffusion due to its low molecular weight. Upon a peroxisomal CoA ligation reaction, catalyzed by a beta-oxidation component enzyme acyl-CoA ligase ACL891, MFDHMP-3C-CoA would then be restricted to peroxisomes for the following beta-oxidation pathway steps. The peroxisomal beta-oxidation machinery than converts MFDHMP-3C-CoA into MPA_CoA, via a beta-oxidation chain-shortening process. Finally mpaH acts as a peroxisomal acyl-CoA hydrolase with high substrate specificity toward MPA-CoA to release the final product MPA. The polypeptide is Type I acyl-CoA thioesterase mpaH (Penicillium roqueforti (strain FM164)).